We begin with the raw amino-acid sequence, 176 residues long: MGRTLEDKKQIVAGLQENLSDTVMTIVIDYQGLTVAEITELRNKLRPAGAQCKITKNTLMRRAIKGDEKWEPLSDWLSDSSAFLLIKDDLGGAIKAYQAFQKATKKTELRGGVMDGQPLSKEDIKAIGDLPSQEVLVAQIAGAINSVTAKVAVGINEVPASLARALQAHSDSDKAA.

The protein belongs to the universal ribosomal protein uL10 family. As to quaternary structure, part of the ribosomal stalk of the 50S ribosomal subunit. The N-terminus interacts with L11 and the large rRNA to form the base of the stalk. The C-terminus forms an elongated spine to which L12 dimers bind in a sequential fashion forming a multimeric L10(L12)X complex.

Forms part of the ribosomal stalk, playing a central role in the interaction of the ribosome with GTP-bound translation factors. This Acaryochloris marina (strain MBIC 11017) protein is Large ribosomal subunit protein uL10.